Here is a 709-residue protein sequence, read N- to C-terminus: Phosphoribosylformylglycinamidine synthase subunit PurL (709 aa).

His-36 is a catalytic residue. ATP contacts are provided by Tyr-39 and Lys-80. Mg(2+) is bound at residue Glu-82. Substrate-binding positions include 83-86 (SHNH) and Arg-105. Residue His-84 is the Proton acceptor of the active site. Asp-106 lines the Mg(2+) pocket. Gln-226 contacts substrate. Asp-252 provides a ligand contact to Mg(2+). 294-296 (ETQ) provides a ligand contact to substrate. ATP-binding residues include Asp-470 and Gly-507. Ser-510 is a substrate binding site.

This sequence belongs to the FGAMS family. Monomer. Part of the FGAM synthase complex composed of 1 PurL, 1 PurQ and 2 PurS subunits.

Its subcellular location is the cytoplasm. It catalyses the reaction N(2)-formyl-N(1)-(5-phospho-beta-D-ribosyl)glycinamide + L-glutamine + ATP + H2O = 2-formamido-N(1)-(5-O-phospho-beta-D-ribosyl)acetamidine + L-glutamate + ADP + phosphate + H(+). The protein operates within purine metabolism; IMP biosynthesis via de novo pathway; 5-amino-1-(5-phospho-D-ribosyl)imidazole from N(2)-formyl-N(1)-(5-phospho-D-ribosyl)glycinamide: step 1/2. Its function is as follows. Part of the phosphoribosylformylglycinamidine synthase complex involved in the purines biosynthetic pathway. Catalyzes the ATP-dependent conversion of formylglycinamide ribonucleotide (FGAR) and glutamine to yield formylglycinamidine ribonucleotide (FGAM) and glutamate. The FGAM synthase complex is composed of three subunits. PurQ produces an ammonia molecule by converting glutamine to glutamate. PurL transfers the ammonia molecule to FGAR to form FGAM in an ATP-dependent manner. PurS interacts with PurQ and PurL and is thought to assist in the transfer of the ammonia molecule from PurQ to PurL. In Saccharolobus islandicus (strain M.16.4 / Kamchatka #3) (Sulfolobus islandicus), this protein is Phosphoribosylformylglycinamidine synthase subunit PurL.